We begin with the raw amino-acid sequence, 1171 residues long: Zinc finger BED domain-containing protein 4 (1171 aa).

The interval 25-62 (EEEDDDGIPPDSLERMDFKSEQEDMKQTDSGGERAGLG) is disordered. Residues 36–51 (SLERMDFKSEQEDMKQ) show a composition bias toward basic and acidic residues. K43 participates in a covalent cross-link: Glycyl lysine isopeptide (Lys-Gly) (interchain with G-Cter in SUMO2). 2 consecutive BED-type zinc fingers follow at residues 115–172 (RKKS…LIQE) and 285–342 (RRRS…VLQE). C136, C139, H160, H165, C306, C309, H330, and H335 together coordinate Zn(2+). Residues 362-385 (LLPPEGELSSVSSSPVKPVRESPS) show a composition bias toward low complexity. Residues 362-405 (LLPPEGELSSVSSSPVKPVRESPSASSSPDRLTEDLQSHLNPGD) form a disordered region. 2 consecutive BED-type zinc fingers follow at residues 456–512 (RLKS…VGSQ) and 558–615 (KKTS…LKTE). Residues C477 and C480 each contribute to the Zn(2+) site. Residue K489 forms a Glycyl lysine isopeptide (Lys-Gly) (interchain with G-Cter in SUMO2) linkage. 6 residues coordinate Zn(2+): H500, H505, C579, C582, H603, and H608. The tract at residues 614–640 (TEVSETARPSSPDTRVPRGTELSGASS) is disordered. At S624 the chain carries Phosphoserine. A required for homodimerization and nuclear accumulation region spans residues 1086–1171 (LAYLEEEVLE…VNLPLIYFQY (86 aa)).

In terms of assembly, homodimer; via C-terminus. Interacts with MYH9. Interacts with SAFB/SAFB1. In terms of tissue distribution, expressed in testis, heart, lung, and weakly expressed in brain, liver, muscle, placenta and small intestine. Expressed in the retina, found in the cone photoreceptors, Mueller cells, cone pedicles and in the innermost retinal layer.

It localises to the nucleus. Its subcellular location is the cytoplasm. It is found in the photoreceptor inner segment. In terms of biological role, transcriptional regulator that binds to poly-guanine tracts in gene promoters and activates transcription. Able to bind single- and double-stranded DNA and RNA. This is Zinc finger BED domain-containing protein 4 (ZBED4) from Homo sapiens (Human).